Here is a 195-residue protein sequence, read N- to C-terminus: Cysteine/O-acetylserine efflux protein (195 aa).

Residues 1-7 are Periplasmic-facing; it reads MTPTLLS. Residues 8–28 form a helical membrane-spanning segment; the sequence is AFWTYTLITAMTPGPNNILAL. The Cytoplasmic portion of the chain corresponds to 29-46; the sequence is SSATSHGFRQSTRVLAGM. The chain crosses the membrane as a helical span at residues 47–67; that stretch reads SLGFLIVMLLCAGISFSLAVI. Residues 68 to 69 lie on the Periplasmic side of the membrane; the sequence is DP. A helical transmembrane segment spans residues 70–90; it reads AAVHLLSWAGAAYIVWLAWKI. Residues 91–104 are Cytoplasmic-facing; the sequence is ATSPTKEDGLQTKP. Residues 105–125 form a helical membrane-spanning segment; sequence ISFWASFALQFVNVKIILYGV. Topologically, residues 126–141 are periplasmic; it reads TALSTFVLPQTQALSW. A helical transmembrane segment spans residues 142–162; it reads VVGVSVLLAMIGTFGNVCWAL. At 163-176 the chain is on the cytoplasmic side; it reads AGHLFQRLFRQYGR. Residues 177-194 form a helical membrane-spanning segment; it reads QLNIVLALLLVYCAVRIF. A topological domain (periplasmic) is located at residue tyrosine 195.

This sequence belongs to the Rht family.

The protein resides in the cell inner membrane. The enzyme catalyses O-acetyl-L-serine(in) = O-acetyl-L-serine(out). It catalyses the reaction L-cysteine(in) = L-cysteine(out). Exporter of O-acetylserine (OAS) and cysteine. This is Cysteine/O-acetylserine efflux protein (eamB) from Escherichia coli O1:K1 / APEC.